We begin with the raw amino-acid sequence, 445 residues long: GRAM domain-containing protein 2B (445 aa).

The residue at position 1 (methionine 1) is an N-acetylmethionine. The disordered stretch occupies residues 1-118 (MVKKRLSSSD…ERKKSSSSSQ (118 aa)). Polar residues-rich tracts occupy residues 18–44 (PSNS…SSEA) and 56–68 (KSPT…SSVE). The segment covering 82-93 (SKSSFDGSSLLS) has biased composition (low complexity). Positions 94–112 (DKNDCKTESKTDSKTERKK) are enriched in basic and acidic residues. Positions 123–190 (MHFHKLFLDV…FSVTLIKKTK (68 aa)) constitute a GRAM domain. Polar residues predominate over residues 233-246 (TSVGNSPNPSSAEN). The tract at residues 233–252 (TSVGNSPNPSSAENSFRADR) is disordered. Phosphoserine is present on residues serine 238, serine 255, and serine 265. The disordered stretch occupies residues 277-331 (DLEGYSSSGSQTPESENSRDFHVTESQTVLNVTKGETKPPRTDAHGSRAPDGKAK). Polar residues predominate over residues 281–291 (YSSSGSQTPES). Over residues 311–330 (GETKPPRTDAHGSRAPDGKA) the composition is skewed to basic and acidic residues.

The protein is GRAM domain-containing protein 2B (Gramd2b) of Mus musculus (Mouse).